The following is a 275-amino-acid chain: Putative protein A464R (275 aa).

Residues 51–175 (KEDVEYLIGM…LMGAIYFDLG (125 aa)) enclose the RNase III domain. The 69-residue stretch at 201 to 269 (NYKDRLLKHT…SKIALHTMGV (69 aa)) folds into the DRBM domain.

It belongs to the ribonuclease III family.

The chain is Putative protein A464R from Chlorella (PBCV-1).